The sequence spans 441 residues: Argininosuccinate lyase (441 aa).

Belongs to the lyase 1 family. Argininosuccinate lyase subfamily.

It localises to the cytoplasm. The enzyme catalyses 2-(N(omega)-L-arginino)succinate = fumarate + L-arginine. The protein operates within amino-acid biosynthesis; L-arginine biosynthesis; L-arginine from L-ornithine and carbamoyl phosphate: step 3/3. This Thermoanaerobacter pseudethanolicus (strain ATCC 33223 / 39E) (Clostridium thermohydrosulfuricum) protein is Argininosuccinate lyase.